We begin with the raw amino-acid sequence, 224 residues long: UPF0758 protein HEAR2468 (224 aa).

The 123-residue stretch at 102–224 (ALNSPQAVKQ…VYSFAEQGQL (123 aa)) folds into the MPN domain. Residues H173, H175, and D186 each contribute to the Zn(2+) site. The JAMM motif motif lies at 173–186 (HNHPSGTPEPSAAD).

It belongs to the UPF0758 family.

This is UPF0758 protein HEAR2468 from Herminiimonas arsenicoxydans.